Reading from the N-terminus, the 129-residue chain is DNA-directed RNA polymerase II subunit RPB9 (129 aa).

Cys21, Cys24, Cys43, Cys46, Cys90, Cys93, Cys118, and Cys123 together coordinate Zn(2+). A C4-type zinc finger spans residues 21-46 (CQECNNMLYPKEDKENKILLYACRNC). A TFIIS-type zinc finger spans residues 86 to 128 (EDHACPKCSHREAVFFQAQTRRAEEEMRLYYVCTNQNCTHRWT).

This sequence belongs to the archaeal RpoM/eukaryotic RPA12/RPB9/RPC11 RNA polymerase family. In terms of assembly, component of the RNA polymerase II (Pol II) complex consisting of 12 subunits.

It is found in the nucleus. The protein resides in the nucleolus. In terms of biological role, DNA-dependent RNA polymerase catalyzes the transcription of DNA into RNA using the four ribonucleoside triphosphates as substrates. Component of RNA polymerase II which synthesizes mRNA precursors and many functional non-coding RNAs. Pol II is the central component of the basal RNA polymerase II transcription machinery. It is composed of mobile elements that move relative to each other. RPB9 is part of the upper jaw surrounding the central large cleft and thought to grab the incoming DNA template. The sequence is that of DNA-directed RNA polymerase II subunit RPB9 from Drosophila melanogaster (Fruit fly).